Reading from the N-terminus, the 371-residue chain is Aminomethyltransferase (371 aa).

The protein belongs to the GcvT family. As to quaternary structure, the glycine cleavage system is composed of four proteins: P, T, L and H.

The catalysed reaction is N(6)-[(R)-S(8)-aminomethyldihydrolipoyl]-L-lysyl-[protein] + (6S)-5,6,7,8-tetrahydrofolate = N(6)-[(R)-dihydrolipoyl]-L-lysyl-[protein] + (6R)-5,10-methylene-5,6,7,8-tetrahydrofolate + NH4(+). Its function is as follows. The glycine cleavage system catalyzes the degradation of glycine. The polypeptide is Aminomethyltransferase (Nitrosococcus oceani (strain ATCC 19707 / BCRC 17464 / JCM 30415 / NCIMB 11848 / C-107)).